The primary structure comprises 344 residues: N-acetyl-gamma-glutamyl-phosphate reductase (344 aa).

The active site involves Cys-149.

It belongs to the NAGSA dehydrogenase family. Type 1 subfamily.

The protein resides in the cytoplasm. The catalysed reaction is N-acetyl-L-glutamate 5-semialdehyde + phosphate + NADP(+) = N-acetyl-L-glutamyl 5-phosphate + NADPH + H(+). Its pathway is amino-acid biosynthesis; L-arginine biosynthesis; N(2)-acetyl-L-ornithine from L-glutamate: step 3/4. Functionally, catalyzes the NADPH-dependent reduction of N-acetyl-5-glutamyl phosphate to yield N-acetyl-L-glutamate 5-semialdehyde. The protein is N-acetyl-gamma-glutamyl-phosphate reductase of Syntrophobacter fumaroxidans (strain DSM 10017 / MPOB).